The primary structure comprises 320 residues: MQTRNTFSWIREEITRSISVSLMIYIITWASISSAYPIFAQQNYENPREATGRIVCANCHLANKPVDIEVPQTVLPDTVFEAVVKIPYDMQLKQVLANGKKGALNVGAVLILPEGFELAPPDRISPEMKEKIGNLSFQNYRPNKKNILVIGPVPGQKYSEITFPILAPDPATNKDVHFLKYPIYVGGNRGRGQIYPDGSKSNNTVYNATAGGIISKILRKEKGGYEITIVDASNERQVIDIIPRGLELLVSEGESIKLDQPLTSNPNVGGFGQGDAEIVLQDPLRVQGLLFFLGSVVLAQIFLVLKKKQFEKVQLSEMNF.

A signal peptide spans 1-35 (MQTRNTFSWIREEITRSISVSLMIYIITWASISSA). 4 residues coordinate heme: Y36, C56, C59, and H60. Residues 286-306 (VQGLLFFLGSVVLAQIFLVLK) form a helical membrane-spanning segment.

The protein belongs to the cytochrome f family. The 4 large subunits of the cytochrome b6-f complex are cytochrome b6, subunit IV (17 kDa polypeptide, petD), cytochrome f and the Rieske protein, while the 4 small subunits are PetG, PetL, PetM and PetN. The complex functions as a dimer. It depends on heme as a cofactor.

It is found in the plastid. Its subcellular location is the chloroplast thylakoid membrane. Functionally, component of the cytochrome b6-f complex, which mediates electron transfer between photosystem II (PSII) and photosystem I (PSI), cyclic electron flow around PSI, and state transitions. The protein is Cytochrome f of Lepidium virginicum (Virginia pepperweed).